Consider the following 257-residue polypeptide: Transmembrane protein C257L (257 aa).

Transmembrane regions (helical) follow at residues 123-143 (LELLGYSPTSLIGGDLMFTAL) and 163-183 (MMIFFLIILLCIILGIFYVLV).

The protein belongs to the asfivirus C257R family.

Its subcellular location is the host membrane. The protein resides in the virion. This Ornithodoros (relapsing fever ticks) protein is Transmembrane protein C257L.